The following is a 283-amino-acid chain: Pyridoxal kinase PdxY (283 aa).

Serine 8 lines the substrate pocket. ATP-binding residues include aspartate 110 and glutamate 147. Aspartate 219 contacts substrate.

Belongs to the pyridoxine kinase family. PdxY subfamily. In terms of assembly, homodimer. Mg(2+) serves as cofactor.

The enzyme catalyses pyridoxal + ATP = pyridoxal 5'-phosphate + ADP + H(+). Its pathway is cofactor metabolism; pyridoxal 5'-phosphate salvage; pyridoxal 5'-phosphate from pyridoxal: step 1/1. Pyridoxal kinase involved in the salvage pathway of pyridoxal 5'-phosphate (PLP). Catalyzes the phosphorylation of pyridoxal to PLP. The protein is Pyridoxal kinase PdxY of Corynebacterium diphtheriae (strain ATCC 700971 / NCTC 13129 / Biotype gravis).